The primary structure comprises 156 residues: Small ribosomal subunit protein uS7 (156 aa).

The protein belongs to the universal ribosomal protein uS7 family. As to quaternary structure, part of the 30S ribosomal subunit. Contacts proteins S9 and S11.

One of the primary rRNA binding proteins, it binds directly to 16S rRNA where it nucleates assembly of the head domain of the 30S subunit. Is located at the subunit interface close to the decoding center, probably blocks exit of the E-site tRNA. The sequence is that of Small ribosomal subunit protein uS7 from Syntrophotalea carbinolica (strain DSM 2380 / NBRC 103641 / GraBd1) (Pelobacter carbinolicus).